Consider the following 593-residue polypeptide: Arginine--tRNA ligase (593 aa).

Positions 138–148 match the 'HIGH' region motif; that stretch reads ANPTGPLHVGH.

It belongs to the class-I aminoacyl-tRNA synthetase family. In terms of assembly, monomer.

The protein localises to the cytoplasm. It catalyses the reaction tRNA(Arg) + L-arginine + ATP = L-arginyl-tRNA(Arg) + AMP + diphosphate. This is Arginine--tRNA ligase from Burkholderia lata (strain ATCC 17760 / DSM 23089 / LMG 22485 / NCIMB 9086 / R18194 / 383).